Reading from the N-terminus, the 2431-residue chain is Reducing polyketide synthase rads1 (2431 aa).

The region spanning 10–440 (RAPIAIIGLA…GTNAHIVLER (431 aa)) is the Ketosynthase family 3 (KS3) domain. Catalysis depends on for beta-ketoacyl synthase activity residues Cys-184, His-319, and His-363. Positions 558–895 (FVFTGQGAQW…NLAAELFRRG (338 aa)) are malonyl-CoA:ACP transacylase (MAT) domain. Positions 944-1080 (KSILGAELPS…GLISIAYEDT (137 aa)) are N-terminal hotdog fold. Residues 944 to 1267 (KSILGAELPS…LAELEVDDAA (324 aa)) form the PKS/mFAS DH domain. Residues 946 to 1264 (ILGAELPSMD…DFRLAELEVD (319 aa)) form a dehydratase (DH) domain region. Catalysis depends on His-976, which acts as the Proton acceptor; for dehydratase activity. A C-terminal hotdog fold region spans residues 1108 to 1267 (PETCSKERFY…LAELEVDDAA (160 aa)). Asp-1174 serves as the catalytic Proton donor; for dehydratase activity. Positions 1705-2023 (GLLNTLHFVP…QGKHLGKMIL (319 aa)) are enoyl reductase (ER) domain. Cys-1822 functions as the Phosphocysteine intermediate in the catalytic mechanism. The tract at residues 2048–2228 (ATYLIVGGLG…VSVNLGIMRD (181 aa)) is ketoreductase (KR) domain. The Carrier domain maps to 2346–2423 (VAAAIITEAL…TFAVQIAKKS (78 aa)). Ser-2383 carries the O-(pantetheine 4'-phosphoryl)serine modification.

It functions in the pathway secondary metabolite biosynthesis. Reducing polyketide synthase; part of the gene cluster that mediates the biosynthesis of radicicol, a resorcylic acid lactone (RAL) that irreversibly inhibits the HSP90 molecular chaperone, an important target for cancer chemotherapy. The cluster encodes only two apparent post-PKS enzymes, a cytochrome P450 monooxygenase (radP) and a non-heme halogenase (radH) that introduce the epoxide and the chlorine, respectively. If this cluster includes all the genes required for radicicol biosynthesis, the remaining structural features of radicicol are presumably generated by the PKSs rads1 and rads2. The C-2' ketone could arise if the R-PKS rads1 and NR-PKS rads2 each carry out four iterations, in contrast to the five iteration-three iteration split for the hypothemycin PKSs. The origin of the cis 5',6' double bond is not known. The radicicol R-PKS radS1 ER domain may catalyze either double bond isomerization or reduction in the third iteration. The protein is Reducing polyketide synthase rads1 of Floropilus chiversii (Chaetomium chiversii).